Here is a 99-residue protein sequence, read N- to C-terminus: uncharacterized protein (99 aa).

An N-terminal signal peptide occupies residues 1–17 (MMMNSFFPAMALMVLVG). Cys-18 is lipidated: N-palmitoyl cysteine. Cys-18 carries S-diacylglycerol cysteine lipidation.

The protein localises to the cell membrane. This is an uncharacterized protein from Escherichia coli O157:H7.